Here is a 193-residue protein sequence, read N- to C-terminus: Imidazoleglycerol-phosphate dehydratase (193 aa).

It belongs to the imidazoleglycerol-phosphate dehydratase family.

It is found in the cytoplasm. It carries out the reaction D-erythro-1-(imidazol-4-yl)glycerol 3-phosphate = 3-(imidazol-4-yl)-2-oxopropyl phosphate + H2O. It functions in the pathway amino-acid biosynthesis; L-histidine biosynthesis; L-histidine from 5-phospho-alpha-D-ribose 1-diphosphate: step 6/9. The protein is Imidazoleglycerol-phosphate dehydratase of Saccharolobus islandicus (strain Y.N.15.51 / Yellowstone #2) (Sulfolobus islandicus).